Reading from the N-terminus, the 416-residue chain is Catalase-peroxidase 2 (416 aa).

The signal sequence occupies residues 1–20 (MLLPLIVFLLSVLIHHRIYS).

This sequence belongs to the peroxidase family. Peroxidase/catalase subfamily. As to quaternary structure, homodimer or homotetramer. Requires heme b as cofactor. Formation of the three residue Trp-Tyr-Met cross-link is important for the catalase, but not the peroxidase activity of the enzyme.

The catalysed reaction is H2O2 + AH2 = A + 2 H2O. The enzyme catalyses 2 H2O2 = O2 + 2 H2O. Functionally, bifunctional enzyme with both catalase and broad-spectrum peroxidase activity. In Alkaliphilus metalliredigens (strain QYMF), this protein is Catalase-peroxidase 2 (katG2).